A 614-amino-acid polypeptide reads, in one-letter code: Jacalin-related lectin 14 (614 aa).

4 consecutive Jacalin-type lectin domains span residues 27–169, 172–314, 317–462, and 468–611; these read VQKM…YFSW, PRKM…YFTT, PTKS…YFSP, and AEKL…HVVP.

This sequence belongs to the jacalin lectin family.

This Arabidopsis thaliana (Mouse-ear cress) protein is Jacalin-related lectin 14 (JAL14).